Consider the following 250-residue polypeptide: Acidic endochitinase (250 aa).

Gln1 bears the Pyrrolidone carboxylic acid mark. The 36-residue stretch at 1–36 (QNCQCDTTIYCCSQHGYCGNSYDYCGPGCQAGPCWD) folds into the Chitin-binding type-1 domain. 7 cysteine pairs are disulfide-bonded: Cys3-Cys12, Cys5-Cys18, Cys11-Cys25, Cys29-Cys34, Cys66-Cys115, Cys128-Cys136, and Cys218-Cys250. The active-site Proton donor is the Glu110.

Belongs to the glycosyl hydrolase 19 family. Chitinase class I subfamily.

The enzyme catalyses Random endo-hydrolysis of N-acetyl-beta-D-glucosaminide (1-&gt;4)-beta-linkages in chitin and chitodextrins.. Its function is as follows. Defense against chitin-containing fungal pathogens. The polypeptide is Acidic endochitinase (Dioscorea japonica (Japanese yam)).